Reading from the N-terminus, the 95-residue chain is Aspartyl/glutamyl-tRNA(Asn/Gln) amidotransferase subunit C (95 aa).

Belongs to the GatC family. Heterotrimer of A, B and C subunits.

The enzyme catalyses L-glutamyl-tRNA(Gln) + L-glutamine + ATP + H2O = L-glutaminyl-tRNA(Gln) + L-glutamate + ADP + phosphate + H(+). It catalyses the reaction L-aspartyl-tRNA(Asn) + L-glutamine + ATP + H2O = L-asparaginyl-tRNA(Asn) + L-glutamate + ADP + phosphate + 2 H(+). Allows the formation of correctly charged Asn-tRNA(Asn) or Gln-tRNA(Gln) through the transamidation of misacylated Asp-tRNA(Asn) or Glu-tRNA(Gln) in organisms which lack either or both of asparaginyl-tRNA or glutaminyl-tRNA synthetases. The reaction takes place in the presence of glutamine and ATP through an activated phospho-Asp-tRNA(Asn) or phospho-Glu-tRNA(Gln). The sequence is that of Aspartyl/glutamyl-tRNA(Asn/Gln) amidotransferase subunit C from Acidiphilium cryptum (strain JF-5).